Consider the following 901-residue polypeptide: HTH-type transcriptional regulator MalT (901 aa).

Position 39-46 (39-46 (SPAGYGKT)) interacts with ATP. The HTH luxR-type domain occupies 829–894 (ELIRTSPLTQ…DAVQHAQQLL (66 aa)). The H-T-H motif DNA-binding region spans 853–872 (NEQIAGELAVAATTIKTHIR).

The protein belongs to the MalT family. Monomer in solution. Oligomerizes to an active state in the presence of the positive effectors ATP and maltotriose.

With respect to regulation, activated by ATP and maltotriose, which are both required for DNA binding. In terms of biological role, positively regulates the transcription of the maltose regulon whose gene products are responsible for uptake and catabolism of malto-oligosaccharides. Specifically binds to the promoter region of its target genes, recognizing a short DNA motif called the MalT box. The sequence is that of HTH-type transcriptional regulator MalT from Salmonella choleraesuis (strain SC-B67).